Here is a 425-residue protein sequence, read N- to C-terminus: CinA-like protein (425 aa).

This sequence belongs to the CinA family.

The polypeptide is CinA-like protein (Shewanella sp. (strain MR-4)).